A 78-amino-acid polypeptide reads, in one-letter code: ATP synthase subunit c (78 aa).

2 helical membrane-spanning segments follow: residues 11-31 (FIGA…VGHV) and 53-73 (LFIG…VALL).

It belongs to the ATPase C chain family. In terms of assembly, F-type ATPases have 2 components, F(1) - the catalytic core - and F(0) - the membrane proton channel. F(1) has five subunits: alpha(3), beta(3), gamma(1), delta(1), epsilon(1). F(0) has four main subunits: a(1), b(1), b'(1) and c(10-14). The alpha and beta chains form an alternating ring which encloses part of the gamma chain. F(1) is attached to F(0) by a central stalk formed by the gamma and epsilon chains, while a peripheral stalk is formed by the delta, b and b' chains.

It localises to the cell inner membrane. F(1)F(0) ATP synthase produces ATP from ADP in the presence of a proton or sodium gradient. F-type ATPases consist of two structural domains, F(1) containing the extramembraneous catalytic core and F(0) containing the membrane proton channel, linked together by a central stalk and a peripheral stalk. During catalysis, ATP synthesis in the catalytic domain of F(1) is coupled via a rotary mechanism of the central stalk subunits to proton translocation. Its function is as follows. Key component of the F(0) channel; it plays a direct role in translocation across the membrane. A homomeric c-ring of between 10-14 subunits forms the central stalk rotor element with the F(1) delta and epsilon subunits. The polypeptide is ATP synthase subunit c (Jannaschia sp. (strain CCS1)).